The sequence spans 298 residues: Inosose dehydratase 1 (298 aa).

This sequence belongs to the IolE/MocC family. The cofactor is glutathione. Requires Co(2+) as cofactor. Mn(2+) is required as a cofactor.

The catalysed reaction is scyllo-inosose = 3D-3,5/4-trihydroxycyclohexane-1,2-dione + H2O. It functions in the pathway polyol metabolism; myo-inositol degradation into acetyl-CoA; acetyl-CoA from myo-inositol: step 2/7. Its function is as follows. Catalyzes the dehydration of inosose (2-keto-myo-inositol, 2KMI or 2,4,6/3,5-pentahydroxycyclohexanone) to 3D-(3,5/4)-trihydroxycyclohexane-1,2-dione (D-2,3-diketo-4-deoxy-epi-inositol). This Bacillus cereus (strain ZK / E33L) protein is Inosose dehydratase 1.